Consider the following 198-residue polypeptide: Thioredoxin reductase-like selenoprotein T homolog CG3887 (198 aa).

The first 25 residues, 1–25, serve as a signal peptide directing secretion; it reads MERLTGRNVALLVLCLCAGYALVFA. An intrachain disulfide couples Cys-49 to Cys-52.

It belongs to the SelWTH family. SELT subfamily.

The enzyme catalyses [thioredoxin]-dithiol + NADP(+) = [thioredoxin]-disulfide + NADPH + H(+). Functionally, probably has thioredoxin reductase-like oxidoreductase activity. The chain is Thioredoxin reductase-like selenoprotein T homolog CG3887 from Drosophila melanogaster (Fruit fly).